Here is a 509-residue protein sequence, read N- to C-terminus: Photosystem II CP47 reaction center protein (509 aa).

6 helical membrane passes run alanine 21 to serine 36, isoleucine 101 to tryptophan 115, glycine 140 to phenylalanine 156, isoleucine 203 to threonine 218, valine 237 to threonine 252, and asparagine 457 to arginine 472.

Belongs to the PsbB/PsbC family. PsbB subfamily. As to quaternary structure, PSII is composed of 1 copy each of membrane proteins PsbA, PsbB, PsbC, PsbD, PsbE, PsbF, PsbH, PsbI, PsbJ, PsbK, PsbL, PsbM, PsbT, PsbX, PsbY, PsbZ, Psb30/Ycf12, at least 3 peripheral proteins of the oxygen-evolving complex and a large number of cofactors. It forms dimeric complexes. The cofactor is Binds multiple chlorophylls. PSII binds additional chlorophylls, carotenoids and specific lipids..

Its subcellular location is the plastid. The protein localises to the chloroplast thylakoid membrane. One of the components of the core complex of photosystem II (PSII). It binds chlorophyll and helps catalyze the primary light-induced photochemical processes of PSII. PSII is a light-driven water:plastoquinone oxidoreductase, using light energy to abstract electrons from H(2)O, generating O(2) and a proton gradient subsequently used for ATP formation. This Pyropia yezoensis (Susabi-nori) protein is Photosystem II CP47 reaction center protein.